Reading from the N-terminus, the 419-residue chain is Creatine kinase S-type, mitochondrial (419 aa).

The N-terminal 39 residues, 1 to 39 (MASAFSKLLTGRNASLLFTTLGTSALTTGYLLNRQKVSA), are a transit peptide targeting the mitochondrion. A cardiolipin-binding region spans residues 40 to 64 (DAREQHKLFPPSADYPDLRKHNNCM). The Phosphagen kinase N-terminal domain maps to 46–132 (KLFPPSADYP…FDPVIKLRHN (87 aa)). Residues 159–401 (YVLSSRVRTG…NYLVDCEKKL (243 aa)) form the Phosphagen kinase C-terminal domain. ATP is bound by residues 162-166 (SSRVR) and histidine 225. Tyrosine 255 bears the Phosphotyrosine mark. ATP contacts are provided by residues arginine 270, arginine 326, 354-359 (RGTGGV), and aspartate 369. A Phosphothreonine modification is found at threonine 356.

It belongs to the ATP:guanido phosphotransferase family. In terms of assembly, exists as an octamer composed of four CKMT2 homodimers.

Its subcellular location is the mitochondrion inner membrane. It carries out the reaction creatine + ATP = N-phosphocreatine + ADP + H(+). In terms of biological role, reversibly catalyzes the transfer of phosphate between ATP and various phosphogens (e.g. creatine phosphate). Creatine kinase isoenzymes play a central role in energy transduction in tissues with large, fluctuating energy demands, such as skeletal muscle, heart, brain and spermatozoa. The polypeptide is Creatine kinase S-type, mitochondrial (Ckmt2) (Mus musculus (Mouse)).